The sequence spans 104 residues: Antitoxin HigA-2 (104 aa).

The 54-residue stretch at 45–98 (IVSIREQFNMSRGVFARLLHTSSRTLENWEQGRSVPNGQAVTLLKLVQRHPETL) folds into the HTH cro/C1-type domain. Residues 56–75 (RGVFARLLHTSSRTLENWEQ) constitute a DNA-binding region (H-T-H motif).

In terms of biological role, antitoxin component of a type II toxin-antitoxin (TA) system that counteracts the effect of the HigB-2 toxin. Binds to its own promoter and regulates transcription of the higB-2/higA-2 operon. In Vibrio cholerae serotype O1 (strain ATCC 39315 / El Tor Inaba N16961), this protein is Antitoxin HigA-2 (higA-2).